The primary structure comprises 139 residues: Cell division protein SepF (139 aa).

This sequence belongs to the SepF family. Homodimer. Interacts with FtsZ.

Its subcellular location is the cytoplasm. Functionally, cell division protein that is part of the divisome complex and is recruited early to the Z-ring. Probably stimulates Z-ring formation, perhaps through the cross-linking of FtsZ protofilaments. Its function overlaps with FtsA. This is Cell division protein SepF from Coprothermobacter proteolyticus (strain ATCC 35245 / DSM 5265 / OCM 4 / BT).